Reading from the N-terminus, the 122-residue chain is Large ribosomal subunit protein uL14 (122 aa).

Belongs to the universal ribosomal protein uL14 family. As to quaternary structure, part of the 50S ribosomal subunit. Forms a cluster with proteins L3 and L19. In the 70S ribosome, L14 and L19 interact and together make contacts with the 16S rRNA in bridges B5 and B8.

Binds to 23S rRNA. Forms part of two intersubunit bridges in the 70S ribosome. The protein is Large ribosomal subunit protein uL14 of Francisella tularensis subsp. holarctica (strain LVS).